The sequence spans 315 residues: Putative HTH-type transcriptional regulatory protein PH1808 (315 aa).

Positions 131–189 constitute an HTH cro/C1-type domain; it reads LKALREEHGYSITELAGILGISRKSLQRYEKGESVVSLEVALRLEEVFDEPLVKPIDVL. Positions 142–161 form a DNA-binding region, H-T-H motif; the sequence is ITELAGILGISRKSLQRYEK.

The sequence is that of Putative HTH-type transcriptional regulatory protein PH1808 from Pyrococcus horikoshii (strain ATCC 700860 / DSM 12428 / JCM 9974 / NBRC 100139 / OT-3).